A 363-amino-acid chain; its full sequence is MANYIHVPPGSPEVPKLDVTVQDQEEQRCRDGALSLLRHLRPHWDPREVTLQLFTDGITNKLIACYVGDTMEDVVLVRIYGNKTELLVDRDEEVKSFRVLQAHGCAPQLYCTFNNGLCYEFIQGEALDPQHVCNPAIFRLIARQLAKIHAIHAHNGWIPKSNLWLKMGKYFSLIPTGFADENINKRFLSEIPSPQLLQEEMTWMKELLSSLGSPVVLCHNDLLCKNIIYNEKQGDVQFIDYEYSGYNYLAYDIGNHFNEFAGVSDVDYSLYPDRELQGQWLRSYLEAYKEYKGFGSDVTEKEVETLFIQVNQFALASHFFWGLWALIQAKYSTIEFDFLGYAVVRFNQYFKMKPEVTALKMPE.

It belongs to the choline/ethanolamine kinase family.

It is found in the cytoplasm. It carries out the reaction ethanolamine + ATP = phosphoethanolamine + ADP + H(+). The protein operates within phospholipid metabolism; phosphatidylethanolamine biosynthesis; phosphatidylethanolamine from ethanolamine: step 1/3. In terms of biological role, highly specific for ethanolamine phosphorylation. May be a rate-controlling step in phosphatidylethanolamine biosynthesis. The protein is Ethanolamine kinase 1 (Etnk1) of Mus musculus (Mouse).